We begin with the raw amino-acid sequence, 436 residues long: GTPase Der (436 aa).

2 consecutive EngA-type G domains span residues 4-167 and 175-351; these read PTVA…PVEE and IRFS…ESQN. GTP contacts are provided by residues 10–17, 57–61, 119–122, 181–188, 229–233, and 294–297; these read GRPNVGKS, DTGGI, NKVD, DTAGM, and NKWD. Residues 352-436 form the KH-like domain; that stretch reads KRIPSAVLND…PIHLIARKRK (85 aa).

The protein belongs to the TRAFAC class TrmE-Era-EngA-EngB-Septin-like GTPase superfamily. EngA (Der) GTPase family. In terms of assembly, associates with the 50S ribosomal subunit.

Its function is as follows. GTPase that plays an essential role in the late steps of ribosome biogenesis. The protein is GTPase Der of Streptococcus pyogenes serotype M3 (strain ATCC BAA-595 / MGAS315).